The sequence spans 454 residues: Replicative DNA helicase DnaC (454 aa).

In terms of domain architecture, SF4 helicase spans 179 to 445 (RKGDITGIPT…NKFVNLERRF (267 aa)). Residue 210–217 (ARPSVGKT) participates in ATP binding.

This sequence belongs to the helicase family. DnaB subfamily. In terms of assembly, the DNA replisome assembles sequentially on oriC in this order; DnaA, DnaD, DnaB, DnaI-DnaC helicase. Monomer in the absence of ATP, in its presence forms a probable homohexamer which is not active as a helicase in vitro. Interacts separately and simultaneously with helicase loaders DnaB and DnaI. Interaction with DnaB does not require ATP. Interaction with DnaI requires ATP, probably forms a DnaC(6):DnaI(6) complex, which is not active as a helicase.

Its subcellular location is the cytoplasm. The protein resides in the nucleoid. It catalyses the reaction Couples ATP hydrolysis with the unwinding of duplex DNA at the replication fork by translocating in the 5'-3' direction. This creates two antiparallel DNA single strands (ssDNA). The leading ssDNA polymer is the template for DNA polymerase III holoenzyme which synthesizes a continuous strand.. It carries out the reaction ATP + H2O = ADP + phosphate + H(+). Its function is as follows. The main replicative DNA helicase, it participates in initiation and elongation during chromosome replication. Travels ahead of the DNA replisome, separating dsDNA into templates for DNA synthesis. The monomer has helicase activity in the presence of DnaI which is further increased by DnaB; the purified oligomeric form (probably a DnaC hexamer) does not have helicase activity in vitro, nor does the DnaC(6):DnaI(6) complex. The direction was not determined but is probably 5'-3'. Helicase activity requires an rNTP and is inactive with dNTPs. Has weak ATPase activity as a monomer, as an oligomer has ATPase activity which is stimulated by single-stranded (ss)DNA and further stimulated by DnaI and more by DnaB. In terms of biological role, deletion of a single T residue in the promoter region (a run of 8 Ts becomes 7 Ts) decreases the helicase levels by 50%, decreasing DNA replication inititation during fast growth in rich medium. Suppresses the synthetic lethality of a dnaA1-yabA deletion for growth on rich medium. The polypeptide is Replicative DNA helicase DnaC (Bacillus subtilis (strain 168)).